Consider the following 198-residue polypeptide: dITP/XTP pyrophosphatase (198 aa).

Position 9–14 (9–14) interacts with substrate; the sequence is SNNAKK. Residues Asp41 and Asp70 each coordinate Mg(2+). Asp70 serves as the catalytic Proton acceptor. Substrate-binding positions include Ser71, 153–156, Lys176, and 181–182; these read FGYD and HR.

Belongs to the HAM1 NTPase family. Homodimer. Mg(2+) serves as cofactor.

It carries out the reaction XTP + H2O = XMP + diphosphate + H(+). The catalysed reaction is dITP + H2O = dIMP + diphosphate + H(+). It catalyses the reaction ITP + H2O = IMP + diphosphate + H(+). Pyrophosphatase that catalyzes the hydrolysis of nucleoside triphosphates to their monophosphate derivatives, with a high preference for the non-canonical purine nucleotides XTP (xanthosine triphosphate), dITP (deoxyinosine triphosphate) and ITP. Seems to function as a house-cleaning enzyme that removes non-canonical purine nucleotides from the nucleotide pool, thus preventing their incorporation into DNA/RNA and avoiding chromosomal lesions. In Aromatoleum aromaticum (strain DSM 19018 / LMG 30748 / EbN1) (Azoarcus sp. (strain EbN1)), this protein is dITP/XTP pyrophosphatase.